Here is a 174-residue protein sequence, read N- to C-terminus: MTLILGIDPGSRITGYGVVRDTGRGCVYVASGCIRTGSGELHERLQIVYRGVREVIKTYGPVTMGIEKVFMARNADSALKLGQARGAAIVAGAEEALEIAEYTATQVKQAVAGTGGANKEQVMMMVMHLLKLTQKPQIDASDALAIALCHAHTRSSLIPHGLSTARSRGGRLRL.

Residues Asp-8, Glu-67, and Asp-139 contribute to the active site. The Mg(2+) site is built by Asp-8, Glu-67, and Asp-139.

The protein belongs to the RuvC family. Homodimer which binds Holliday junction (HJ) DNA. The HJ becomes 2-fold symmetrical on binding to RuvC with unstacked arms; it has a different conformation from HJ DNA in complex with RuvA. In the full resolvosome a probable DNA-RuvA(4)-RuvB(12)-RuvC(2) complex forms which resolves the HJ. Mg(2+) serves as cofactor.

It localises to the cytoplasm. The catalysed reaction is Endonucleolytic cleavage at a junction such as a reciprocal single-stranded crossover between two homologous DNA duplexes (Holliday junction).. Functionally, the RuvA-RuvB-RuvC complex processes Holliday junction (HJ) DNA during genetic recombination and DNA repair. Endonuclease that resolves HJ intermediates. Cleaves cruciform DNA by making single-stranded nicks across the HJ at symmetrical positions within the homologous arms, yielding a 5'-phosphate and a 3'-hydroxyl group; requires a central core of homology in the junction. The consensus cleavage sequence is 5'-(A/T)TT(C/G)-3'. Cleavage occurs on the 3'-side of the TT dinucleotide at the point of strand exchange. HJ branch migration catalyzed by RuvA-RuvB allows RuvC to scan DNA until it finds its consensus sequence, where it cleaves and resolves the cruciform DNA. The protein is Crossover junction endodeoxyribonuclease RuvC of Pseudomonas savastanoi pv. phaseolicola (strain 1448A / Race 6) (Pseudomonas syringae pv. phaseolicola (strain 1448A / Race 6)).